A 496-amino-acid chain; its full sequence is uncharacterized protein (496 aa).

The span at 118–129 (LDRPFIKPRREN) shows a compositional bias: basic and acidic residues. The segment at 118-187 (LDRPFIKPRR…NPHQSNRNTS (70 aa)) is disordered. Over residues 151–187 (TSDSQYASPFENHSITNLPIGQKQPFNNPHQSNRNTS) the composition is skewed to polar residues.

This is an uncharacterized protein from Acanthamoeba polyphaga mimivirus (APMV).